A 61-amino-acid chain; its full sequence is Probradykinin-1 (61 aa).

The signal sequence occupies residues 1–22; it reads MSFLKKSLFLVLFLGLVSFSIC. Residues 23 to 48 constitute a propeptide that is removed on maturation; sequence EEEKRETEEEENKDETEEQSEEKKRF. The segment at 24–61 is disordered; sequence EEKRETEEEENKDETEEQSEEKKRFEPVPPGFTPFRLT. Over residues 30 to 42 the composition is skewed to acidic residues; sequence EEEENKDETEEQS.

The protein belongs to the frog skin active peptide (FSAP) family. Bradykinin-related peptide subfamily. In terms of tissue distribution, expressed by the skin glands.

Its subcellular location is the secreted. Functionally, may produce in vitro relaxation of rat arterial smooth muscle and constriction of intestinal smooth muscle. May target bradykinin receptors (BDKRB). The sequence is that of Probradykinin-1 from Pithecopus azureus (Orange-legged monkey tree frog).